A 468-amino-acid polypeptide reads, in one-letter code: Glutamine synthetase (468 aa).

The GS beta-grasp domain maps to 11–96 (HDVKWIDLRF…LVCDIIEPST (86 aa)). A GS catalytic domain is found at 104-468 (PRAIAHRAEE…PLEYELYYSC (365 aa)). Residues glutamate 129 and glutamate 131 each coordinate Mg(2+). Glutamate 207 contacts ATP. Mg(2+) contacts are provided by glutamate 212 and glutamate 220. L-glutamate contacts are provided by residues 264–265 (NG) and glycine 265. Residue histidine 269 participates in Mg(2+) binding. Residues 271 to 273 (HMS) and serine 273 contribute to the ATP site. Residues arginine 321, glutamate 327, and arginine 339 each contribute to the L-glutamate site. Positions 339, 344, and 352 each coordinate ATP. Glutamate 357 serves as a coordination point for Mg(2+). Arginine 359 contributes to the L-glutamate binding site. Tyrosine 397 carries the O-AMP-tyrosine modification.

The protein belongs to the glutamine synthetase family. Oligomer of 12 subunits arranged in the form of two hexagons. Mg(2+) serves as cofactor. Mn(2+) is required as a cofactor.

It carries out the reaction L-glutamate + NH4(+) + ATP = L-glutamine + ADP + phosphate + H(+). With respect to regulation, when cellular nitrogen levels are high, the C-terminal adenylyl transferase (AT) of GlnE inhibits GlnA by covalent transfer of an adenylyl group from ATP to Tyr-397. Conversely, when nitrogen levels are low, the N-terminal adenylyl removase (AR) of GlnE activates GlnA by removing the adenylyl group by phosphorolysis. The fully adenylated enzyme complex is inactive. Its function is as follows. Catalyzes the formation of glutamine from glutamate and ammonia. In vitro, can also use hydroxylamine, methylamine and ethylamine, with 32%, 7% and 1% activity compared to ammonia, respectively. The protein is Glutamine synthetase of Pseudomonas taetrolens.